A 411-amino-acid polypeptide reads, in one-letter code: Putative polysaccharide ligase RC0486 (411 aa).

A run of 10 helical transmembrane segments spans residues 15–35 (LGML…LISF), 78–98 (GITM…IHLI), 101–121 (LATF…SNSA), 133–153 (LIFG…SNGF), 166–186 (MLDR…IILL), 207–227 (ISDS…FILT), 233–253 (IFFK…PVIA), 328–348 (ILQI…CLVY), 361–381 (NFKA…MISY), and 383–403 (IWQI…KLLV).

The protein belongs to the O-antigen ligase family.

It localises to the membrane. The polypeptide is Putative polysaccharide ligase RC0486 (Rickettsia conorii (strain ATCC VR-613 / Malish 7)).